We begin with the raw amino-acid sequence, 129 residues long: MARPKKVVKKKEKKSVPVGIAHIQASFNNTIITFTDTRGNAVSWASSGQSGFKGSRKSTPFAAQVAAETAARKAQDNGMRTVGIYVQGPGSGREAAMRAISAAGMKVAFIRDVTPIPHNGCRPPKRRRV.

Belongs to the universal ribosomal protein uS11 family. In terms of assembly, part of the 30S ribosomal subunit. Interacts with proteins S7 and S18. Binds to IF-3.

Its function is as follows. Located on the platform of the 30S subunit, it bridges several disparate RNA helices of the 16S rRNA. Forms part of the Shine-Dalgarno cleft in the 70S ribosome. This Desulfovibrio desulfuricans (strain ATCC 27774 / DSM 6949 / MB) protein is Small ribosomal subunit protein uS11.